The chain runs to 172 residues: C-phycocyanin beta subunit (172 aa).

The residue at position 72 (asparagine 72) is an N4-methylasparagine. (2R,3E)-phycocyanobilin contacts are provided by cysteine 82 and cysteine 153.

It belongs to the phycobiliprotein family. In terms of assembly, heterodimer of an alpha and a beta chain, which further assembles into trimers. The trimers assemble into hexamers, although these were not seen in the crystallographic studies. Part of 2 PBS rod complexes, the conventional CpcG-PBS rod and a photosystem I-specific CpcL-PBS rod, both of which include ferredoxin--NADP reductase (petH). Interacts with rod linker CpcC2 via the latter's N-terminal PBS-linker domain. In terms of processing, contains two covalently linked bilin chromophores.

Its subcellular location is the cellular thylakoid membrane. Functionally, light-harvesting photosynthetic bile pigment-protein from the phycobiliprotein complex (phycobilisome, PBS). Phycocyanin is the major phycobiliprotein in the PBS rod. This Synechocystis sp. (strain ATCC 27184 / PCC 6803 / Kazusa) protein is C-phycocyanin beta subunit (cpcB).